The chain runs to 1238 residues: Protein MMS22-like (1238 aa).

Belongs to the MMS22 family. MMS22L subfamily. In terms of assembly, component of the MMS22L-TONSL complex, a complex at least composed of MMS22L and TONSL/NFKBIL2. Interacts with RAD51; interaction is direct. Degraded by the ubiquitin-proteasome system upon replication stress.

It is found in the nucleus. Its subcellular location is the chromosome. Functionally, component of the MMS22L-TONSL complex, a complex that promotes homologous recombination-mediated repair of double-strand breaks (DSBs) at stalled or collapsed replication forks. The MMS22L-TONSL complex is required to maintain genome integrity during DNA replication. It mediates the assembly of RAD51 filaments on single-stranded DNA (ssDNA): the MMS22L-TONSL complex is recruited to DSBs following histone replacement by histone chaperones and eviction of the replication protein A complex (RPA/RP-A) from DSBs. Following recruitment to DSBs, the TONSL-MMS22L complex promotes recruitment of RAD51 filaments and subsequent homologous recombination. Within the complex, MMS22L acts by binding ssDNA. This chain is Protein MMS22-like (Mms22l), found in Mus musculus (Mouse).